We begin with the raw amino-acid sequence, 261 residues long: Kallikrein 1-related peptidase b8 (261 aa).

The first 18 residues, 1-18 (MRFLILFLALSLGGIDAA), serve as a signal peptide directing secretion. The propeptide at 19-24 (PPLQSR) is activation peptide. Residues 25–258 (VVGGFNCEKN…FNSWIKDTMT (234 aa)) form the Peptidase S1 domain. 5 disulfide bridges follow: Cys31/Cys173, Cys50/Cys66, Cys152/Cys219, Cys184/Cys198, and Cys209/Cys234. His65 (charge relay system) is an active-site residue. A glycan (N-linked (GlcNAc...) asparagine) is linked at Asn102. The active-site Charge relay system is Asp120. The active-site Charge relay system is Ser213.

It belongs to the peptidase S1 family. Kallikrein subfamily.

The enzyme catalyses Preferential cleavage of Arg-|-Xaa bonds in small molecule substrates. Highly selective action to release kallidin (lysyl-bradykinin) from kininogen involves hydrolysis of Met-|-Xaa or Leu-|-Xaa.. In terms of biological role, glandular kallikreins cleave Met-Lys and Arg-Ser bonds in kininogen to release Lys-bradykinin. The chain is Kallikrein 1-related peptidase b8 (Klk1b8) from Mus musculus (Mouse).